The primary structure comprises 116 residues: Methionine-R-sulfoxide reductase B1 (116 aa).

Residues 1–106 (MSFCSFFGGE…FSSSLKFIPK (106 aa)) form the MsrB domain. The Zn(2+) site is built by Cys-23, Cys-26, Cys-71, and Cys-74. Residue Sec-95 is the Nucleophile of the active site. Residue Sec-95 is a non-standard amino acid, selenocysteine.

It belongs to the MsrB Met sulfoxide reductase family. It depends on Zn(2+) as a cofactor. Truncated MSRB1/SEPX1 proteins produced by failed UGA/Sec decoding are ubiquitinated by the CRL2(FEM1C) E3 ubiquitin-protein ligase complex.

The protein resides in the cytoplasm. Its subcellular location is the nucleus. The protein localises to the cytoskeleton. The catalysed reaction is L-methionyl-[protein] + [thioredoxin]-disulfide + H2O = L-methionyl-(R)-S-oxide-[protein] + [thioredoxin]-dithiol. The enzyme catalyses [thioredoxin]-disulfide + L-methionine + H2O = L-methionine (R)-S-oxide + [thioredoxin]-dithiol. Methionine-sulfoxide reductase that specifically reduces methionine (R)-sulfoxide back to methionine. While in many cases, methionine oxidation is the result of random oxidation following oxidative stress, methionine oxidation is also a post-translational modification that takes place on specific residue. Acts as a regulator of actin assembly by reducing methionine (R)-sulfoxide mediated by MICALs (MICAL1, MICAL2 or MICAL3) on actin, thereby promoting filament repolymerization. Plays a role in innate immunity by reducing oxidized actin, leading to actin repolymerization in macrophages. The polypeptide is Methionine-R-sulfoxide reductase B1 (MSRB1) (Bos taurus (Bovine)).